A 718-amino-acid polypeptide reads, in one-letter code: Cyclomaltodextrin glucanotransferase (718 aa).

A signal peptide spans 1–34; that stretch reads MFQMAKRAFLSTTLTLGLLAGSALPFLPASAAYA. The tract at residues 35-172 is A1; it reads DPDIAVTNKQ…GIKIIIDFAP (138 aa). Ca(2+) is bound by residues Asp61, Asn63, Asn66, and Asn67. A disulfide bond links Cys77 and Cys84. Positions 85 and 87 each coordinate Ca(2+). Substrate is bound at residue 134-135; it reads YW. Asn173 provides a ligand contact to Ca(2+). The b stretch occupies residues 173-236; the sequence is NHTSPAMETD…NLYDLADFNH (64 aa). His174 provides a ligand contact to substrate. Ile224 is a Ca(2+) binding site. 227-230 is a substrate binding site; that stretch reads NLYD. Residue Asp233 coordinates Ca(2+). The A2 stretch occupies residues 237–440; it reads NNATIDKYFK…LRKSNPAIAY (204 aa). Arg261 lines the substrate pocket. Asp263 functions as the Nucleophile in the catalytic mechanism. 266 to 267 lines the substrate pocket; it reads KH. His267 is a binding site for Ca(2+). Glu291 (proton donor) is an active-site residue. Residues His361, Asp405, and Arg409 each coordinate substrate. The c stretch occupies residues 441 to 528; the sequence is GSTQQRWINN…ATAVWQYTAA (88 aa). A d region spans residues 529–614; sequence ETTPTIGHVG…SNAYNHFTIL (86 aa). Residues 532-612 form the IPT/TIG domain; the sequence is PTIGHVGPVM…VNSNAYNHFT (81 aa). A CBM20 domain is found at 613 to 718; sequence ILTGDQVTVR…GTATVTVNWQ (106 aa). Residues 615-718 form an e region; it reads TGDQVTVRFV…GTATVTVNWQ (104 aa).

This sequence belongs to the glycosyl hydrolase 13 family. Monomer. The cofactor is Ca(2+).

Its subcellular location is the secreted. It catalyses the reaction Cyclizes part of a (1-&gt;4)-alpha-D-glucan chain by formation of a (1-&gt;4)-alpha-D-glucosidic bond.. This chain is Cyclomaltodextrin glucanotransferase (cgt), found in Bacillus sp. (strain 6.6.3).